Here is a 122-residue protein sequence, read N- to C-terminus: Large ribosomal subunit protein uL14 (122 aa).

Belongs to the universal ribosomal protein uL14 family. In terms of assembly, part of the 50S ribosomal subunit. Forms a cluster with proteins L3 and L19. In the 70S ribosome, L14 and L19 interact and together make contacts with the 16S rRNA in bridges B5 and B8.

Functionally, binds to 23S rRNA. Forms part of two intersubunit bridges in the 70S ribosome. The chain is Large ribosomal subunit protein uL14 from Lysinibacillus sphaericus (strain C3-41).